Consider the following 387-residue polypeptide: Alkanesulfonate monooxygenase (387 aa).

It belongs to the SsuD family.

It carries out the reaction an alkanesulfonate + FMNH2 + O2 = an aldehyde + FMN + sulfite + H2O + 2 H(+). Functionally, catalyzes the desulfonation of aliphatic sulfonates. The chain is Alkanesulfonate monooxygenase from Cupriavidus pinatubonensis (strain JMP 134 / LMG 1197) (Cupriavidus necator (strain JMP 134)).